The primary structure comprises 528 residues: ATP synthase subunit alpha 1 (528 aa).

169–176 (GDRQTGKT) is an ATP binding site.

This sequence belongs to the ATPase alpha/beta chains family. In terms of assembly, F-type ATPases have 2 components, CF(1) - the catalytic core - and CF(0) - the membrane proton channel. CF(1) has five subunits: alpha(3), beta(3), gamma(1), delta(1), epsilon(1). CF(0) has three main subunits: a(1), b(2) and c(9-12). The alpha and beta chains form an alternating ring which encloses part of the gamma chain. CF(1) is attached to CF(0) by a central stalk formed by the gamma and epsilon chains, while a peripheral stalk is formed by the delta and b chains.

The protein resides in the cell membrane. The enzyme catalyses ATP + H2O + 4 H(+)(in) = ADP + phosphate + 5 H(+)(out). Its function is as follows. Produces ATP from ADP in the presence of a proton gradient across the membrane. The alpha chain is a regulatory subunit. This Mycoplasmopsis pulmonis (strain UAB CTIP) (Mycoplasma pulmonis) protein is ATP synthase subunit alpha 1.